We begin with the raw amino-acid sequence, 362 residues long: Sterol-4-alpha-carboxylate 3-dehydrogenase, decarboxylating (362 aa).

Met-1 carries the post-translational modification N-acetylmethionine. Tyr-161 (proton acceptor) is an active-site residue. NAD(+) is bound at residue Lys-165. A helical transmembrane segment spans residues 287 to 307; it reads WMAYYLAFLLSLLVMVVSPLI. The short motif at 359–362 is the Prevents secretion from ER element; that stretch reads RKDK.

Belongs to the 3-beta-HSD family. In terms of assembly, homodimer.

The protein resides in the endoplasmic reticulum membrane. Its subcellular location is the lipid droplet. It carries out the reaction a 3beta-hydroxysteroid-4alpha-carboxylate + NADP(+) = a 3-oxosteroid + CO2 + NADPH. The enzyme catalyses a 3beta-hydroxysteroid-4alpha-carboxylate + NAD(+) = a 3-oxosteroid + CO2 + NADH. It catalyses the reaction 4alpha-carboxyzymosterol + NADP(+) = zymosterone + CO2 + NADPH. The catalysed reaction is 4alpha-carboxy-4beta-methyl-5alpha-cholest-8-en-3beta-ol + NADP(+) = 4alpha-methyl-5alpha-cholest-8-en-3-one + CO2 + NADPH. It carries out the reaction 4alpha-carboxy-5alpha-cholest-8-ene-3beta-ol + NADP(+) = 5alpha-cholest-8-en-3-one + CO2 + NADPH. The enzyme catalyses 4beta-methylzymosterol-4alpha-carboxylate + NADP(+) = 3-dehydro-4-methylzymosterol + CO2 + NADPH. It catalyses the reaction 4beta-methylzymosterol-4alpha-carboxylate + NAD(+) = 3-dehydro-4-methylzymosterol + CO2 + NADH. The catalysed reaction is 4alpha-carboxy-5alpha-cholest-8-ene-3beta-ol + NAD(+) = 5alpha-cholest-8-en-3-one + CO2 + NADH. It carries out the reaction 4alpha-carboxy-4beta-methyl-5alpha-cholest-8-en-3beta-ol + NAD(+) = 4alpha-methyl-5alpha-cholest-8-en-3-one + CO2 + NADH. The enzyme catalyses 4alpha-carboxyzymosterol + NAD(+) = zymosterone + CO2 + NADH. It functions in the pathway steroid biosynthesis; zymosterol biosynthesis; zymosterol from lanosterol: step 4/6. Functionally, catalyzes the NAD(P)(+)-dependent oxidative decarboxylation of the C4 methyl groups of 4-alpha-carboxysterols in post-squalene cholesterol biosynthesis. Plays a role in the regulation of the endocytic trafficking of EGFR. The chain is Sterol-4-alpha-carboxylate 3-dehydrogenase, decarboxylating (Nsdhl) from Mus musculus (Mouse).